The chain runs to 515 residues: Bifunctional purine biosynthesis protein PurH (515 aa).

An MGS-like domain is found at 1–145 (MTKRVLISVS…KNHASVTVVV (145 aa)).

This sequence belongs to the PurH family.

The catalysed reaction is (6R)-10-formyltetrahydrofolate + 5-amino-1-(5-phospho-beta-D-ribosyl)imidazole-4-carboxamide = 5-formamido-1-(5-phospho-D-ribosyl)imidazole-4-carboxamide + (6S)-5,6,7,8-tetrahydrofolate. It carries out the reaction IMP + H2O = 5-formamido-1-(5-phospho-D-ribosyl)imidazole-4-carboxamide. The protein operates within purine metabolism; IMP biosynthesis via de novo pathway; 5-formamido-1-(5-phospho-D-ribosyl)imidazole-4-carboxamide from 5-amino-1-(5-phospho-D-ribosyl)imidazole-4-carboxamide (10-formyl THF route): step 1/1. It participates in purine metabolism; IMP biosynthesis via de novo pathway; IMP from 5-formamido-1-(5-phospho-D-ribosyl)imidazole-4-carboxamide: step 1/1. The chain is Bifunctional purine biosynthesis protein PurH from Streptococcus pneumoniae (strain 70585).